Consider the following 246-residue polypeptide: Transcription factor A, mitochondrial (246 aa).

The N-terminal 42 residues, 1–42 (MALLRGVWGVLSALGKSGADLCAVCGSRLRSPFSFAYVPRWF), are a transit peptide targeting the mitochondrion. The segment at residues 50–118 (PKKPMTSYVR…VYKEEVNRIQ (69 aa)) is a DNA-binding region (HMG box 1). 2 positions are modified to phosphoserine; by PKA: serine 56 and serine 61. A Phosphothreonine modification is found at threonine 122. The HMG box 2 DNA-binding region spans 155 to 219 (PKRPRSAYNI…RYYNEMKSWE (65 aa)). At serine 160 the chain carries Phosphoserine; by PKA. A phosphoserine mark is found at serine 193 and serine 195.

As to quaternary structure, monomer; binds DNA as a monomer. Homodimer. Component of the mitochondrial transcription initiation complex, composed at least of TFB2M, TFAM and POLRMT. In this complex TFAM recruits POLRMT to the promoter whereas TFB2M induces structural changes in POLRMT to enable promoter opening and trapping of the DNA non-template strand. Upon metabolic stress, forms a complex composed of FOXO3, SIRT3, TFAM and POLRMT. Interacts with TFB1M and TFB2M. Interacts with CLPX; this enhances DNA-binding. Post-translationally, phosphorylation by PKA within the HMG box 1 impairs DNA binding and promotes degradation by the AAA+ Lon protease.

The protein resides in the mitochondrion. It localises to the mitochondrion matrix. It is found in the mitochondrion nucleoid. Binds to the mitochondrial light strand promoter and functions in mitochondrial transcription regulation. Component of the mitochondrial transcription initiation complex, composed at least of TFB2M, TFAM and POLRMT that is required for basal transcription of mitochondrial DNA. In this complex, TFAM recruits POLRMT to a specific promoter whereas TFB2M induces structural changes in POLRMT to enable promoter opening and trapping of the DNA non-template strand. Required for accurate and efficient promoter recognition by the mitochondrial RNA polymerase. Promotes transcription initiation from the HSP1 and the light strand promoter by binding immediately upstream of transcriptional start sites. Is able to unwind DNA. Bends the mitochondrial light strand promoter DNA into a U-turn shape via its HMG boxes. Required for maintenance of normal levels of mitochondrial DNA. May play a role in organizing and compacting mitochondrial DNA. In Sus scrofa (Pig), this protein is Transcription factor A, mitochondrial.